The chain runs to 368 residues: Agmatine deiminase (368 aa).

Catalysis depends on Cys-357, which acts as the Amidino-cysteine intermediate.

It belongs to the agmatine deiminase family. In terms of assembly, homodimer.

The catalysed reaction is agmatine + H2O = N-carbamoylputrescine + NH4(+). It participates in amine and polyamine biosynthesis; putrescine biosynthesis via agmatine pathway; N-carbamoylputrescine from agmatine: step 1/1. Its function is as follows. Mediates the hydrolysis of agmatine into N-carbamoylputrescine in the arginine decarboxylase (ADC) pathway of putrescine biosynthesis, a basic polyamine. In Pseudomonas putida (strain ATCC 47054 / DSM 6125 / CFBP 8728 / NCIMB 11950 / KT2440), this protein is Agmatine deiminase.